A 1343-amino-acid polypeptide reads, in one-letter code: Kinesin-like protein KIF7 (1343 aa).

Residues 15–349 (PVRVALRVRP…LNYASRAQNI (335 aa)) enclose the Kinesin motor domain. 94–101 (GQTGSGKT) serves as a coordination point for ATP. Disordered regions lie at residues 356–382 (NWRP…RSET), 451–483 (RSAL…RKED), and 611–639 (EVNR…TLHL). Residues 358 to 479 (RPEAERPPEE…EDQAAQGAGG (122 aa)) form an interaction with DLG5 region. An interaction with SMO region spans residues 358-1206 (RPEAERPPEE…LGRYMWINQE (849 aa)). Positions 480-542 (RKEDEGAQQL…ELRLRLELVR (63 aa)) form a coiled coil. Residues 513–775 (AMEQYKLQSD…LRELEGKELQ (263 aa)) are sufficient for interaction with NPHP1. Coiled coils occupy residues 698–1057 (ASEW…AAIE) and 1109–1211 (TLRE…KQKL). Residue serine 898 is modified to Phosphoserine. Disordered stretches follow at residues 1219 to 1238 (HSRG…APGN) and 1310 to 1343 (GEAG…KNPL).

The protein belongs to the TRAFAC class myosin-kinesin ATPase superfamily. Kinesin family. KIF27 subfamily. In terms of assembly, can form homodimers and interacts with microtubules. Interacts with GLI1, GLI2, GLI3, SMO and SUFU. Interacts with NPHP1. Interacts with SMO and DLG5 (via PDZ4 or guanylate kinase-like domain). Post-translationally, polyubiquitinated by UBR3. In terms of tissue distribution, embryonic stem cells, melanotic melanoma and Jurkat T-cells. Expressed in heart, lung, liver, kidney, testis, retina, placenta, pancreas, colon, small intestin, prostate and thymus.

It localises to the cell projection. The protein resides in the cilium. Its subcellular location is the cytoplasm. The protein localises to the cytoskeleton. It is found in the cilium basal body. In terms of biological role, essential for hedgehog signaling regulation: acts both as a negative and positive regulator of sonic hedgehog (Shh) and Indian hedgehog (Ihh) pathways, acting downstream of SMO, through both SUFU-dependent and -independent mechanisms. Involved in the regulation of microtubular dynamics. Required for proper organization of the ciliary tip and control of ciliary localization of SUFU-GLI2 complexes. Required for localization of GLI3 to cilia in response to Shh. Negatively regulates Shh signaling by preventing inappropriate activation of the transcriptional activator GLI2 in the absence of ligand. Positively regulates Shh signaling by preventing the processing of the transcription factor GLI3 into its repressor form. In keratinocytes, promotes the dissociation of SUFU-GLI2 complexes, GLI2 nuclear translocation and Shh signaling activation. Involved in the regulation of epidermal differentiation and chondrocyte development. The chain is Kinesin-like protein KIF7 (KIF7) from Homo sapiens (Human).